The chain runs to 197 residues: Class A basic helix-loop-helix protein 15 (197 aa).

Positions 1 to 12 (MKTKNRPPRRRT) are enriched in basic residues. Disordered stretches follow at residues 1-82 (MKTK…ERER) and 175-197 (TEDQPQGHLQRYSTQIHSFREGS). Phosphothreonine is present on residues Thr12 and Thr25. Residues 27–36 (DRSQSGSGAS) show a composition bias toward polar residues. Positions 65-82 (SRRENSVQRRLESNERER) are enriched in basic and acidic residues. The bHLH domain occupies 72 to 124 (QRRLESNERERQRMHKLNNAFQALREVIPHVRADKKLSKIETLTLAKNYIKSL).

In terms of assembly, forms homodimers or heterodimers with TCF3 gene products E12 and E47. These dimers bind to the E-box site, however, heterodimer with MYOD1 does not bind target DNA. In terms of tissue distribution, expressed in liver, spleen and olfactory epithelium. Weaker expression is seen in skeletal muscle, cardiac muscle, eye and brain tissue.

Its subcellular location is the nucleus. Functionally, plays a role in controlling the transcriptional activity of MyoD, ensuring that expanding myoblast populations remain undifferentiated. Repression may occur through muscle-specific E-box occupancy by homodimers. May also negatively regulate bHLH-mediated transcription through an N-terminal repressor domain. Serves as a key regulator of acinar cell function, stability, and identity. Also required for normal organelle localization in exocrine cells and for mitochondrial calcium ion transport. May function as a unique regulator of gene expression in several different embryonic and postnatal cell lineages. Binds to the E-box consensus sequence 5'-CANNTG-3'. This Rattus norvegicus (Rat) protein is Class A basic helix-loop-helix protein 15 (Bhlha15).